A 520-amino-acid chain; its full sequence is Autophagy-related protein 22 (520 aa).

N11 carries N-linked (GlcNAc...) asparagine glycosylation. Transmembrane regions (helical) follow at residues 32-52, 104-124, 133-153, and 158-178; these read IVGW…AIAT, FSVS…VVDI, NVLL…SRIY, and YMLA…NVVG. The N-linked (GlcNAc...) asparagine glycan is linked to N193. The next 2 membrane-spanning stretches (helical) occupy residues 214–234 and 244–264; these read GASI…FLIK and VATL…SWLL. The N-linked (GlcNAc...) asparagine glycan is linked to N280. Helical transmembrane passes span 316 to 336, 350 to 370, 386 to 406, 415 to 435, 454 to 474, and 483 to 503; these read VVIF…INST, LSLI…AFTI, LIYI…GFVF, FEMF…SAVS, IFNV…GLIT, and SFFL…LLDV.

This sequence belongs to the ATG22 family.

The protein localises to the vacuole membrane. Vacuolar effluxer which mediate the efflux of amino acids resulting from autophagic degradation. The release of autophagic amino acids allows the maintenance of protein synthesis and viability during nitrogen starvation. This chain is Autophagy-related protein 22 (ATG22), found in Vanderwaltozyma polyspora (strain ATCC 22028 / DSM 70294 / BCRC 21397 / CBS 2163 / NBRC 10782 / NRRL Y-8283 / UCD 57-17) (Kluyveromyces polysporus).